Reading from the N-terminus, the 190-residue chain is Holliday junction branch migration complex subunit RuvA (190 aa).

Residues 1 to 64 form a domain I region; that stretch reads MIGRISGQLA…EDAQILYGFG (64 aa). Residues 65–137 are domain II; it reads SATERAAFRQ…LKGKLGADIG (73 aa). The flexible linker stretch occupies residues 137–141; that stretch reads GVQVS. The interval 142–190 is domain III; it reads VSSDSQSDILQALVALGYSDRDAALALKALPKDIGVSDGIKLALKALAK.

The protein belongs to the RuvA family. Homotetramer. Forms an RuvA(8)-RuvB(12)-Holliday junction (HJ) complex. HJ DNA is sandwiched between 2 RuvA tetramers; dsDNA enters through RuvA and exits via RuvB. An RuvB hexamer assembles on each DNA strand where it exits the tetramer. Each RuvB hexamer is contacted by two RuvA subunits (via domain III) on 2 adjacent RuvB subunits; this complex drives branch migration. In the full resolvosome a probable DNA-RuvA(4)-RuvB(12)-RuvC(2) complex forms which resolves the HJ.

The protein resides in the cytoplasm. In terms of biological role, the RuvA-RuvB-RuvC complex processes Holliday junction (HJ) DNA during genetic recombination and DNA repair, while the RuvA-RuvB complex plays an important role in the rescue of blocked DNA replication forks via replication fork reversal (RFR). RuvA specifically binds to HJ cruciform DNA, conferring on it an open structure. The RuvB hexamer acts as an ATP-dependent pump, pulling dsDNA into and through the RuvAB complex. HJ branch migration allows RuvC to scan DNA until it finds its consensus sequence, where it cleaves and resolves the cruciform DNA. The protein is Holliday junction branch migration complex subunit RuvA of Polaromonas sp. (strain JS666 / ATCC BAA-500).